The primary structure comprises 117 residues: UPF0344 protein GK0697 (117 aa).

Helical transmembrane passes span 1–21, 39–59, 60–80, and 97–117; these read MTHA…LAVS, LFYI…ASIS, ALYW…EMVL, and VIAL…FDLF.

The protein belongs to the UPF0344 family.

It localises to the cell membrane. This is UPF0344 protein GK0697 from Geobacillus kaustophilus (strain HTA426).